Here is a 120-residue protein sequence, read N- to C-terminus: NADH-ubiquinone oxidoreductase chain 3 (120 aa).

3 helical membrane-spanning segments follow: residues 7 to 27 (FVYI…LFFL), 62 to 82 (FYLV…LFPF), and 89 to 109 (MTLL…IGFI).

It belongs to the complex I subunit 3 family.

The protein resides in the mitochondrion membrane. The catalysed reaction is a ubiquinone + NADH + 5 H(+)(in) = a ubiquinol + NAD(+) + 4 H(+)(out). In terms of biological role, core subunit of the mitochondrial membrane respiratory chain NADH dehydrogenase (Complex I) that is believed to belong to the minimal assembly required for catalysis. Complex I functions in the transfer of electrons from NADH to the respiratory chain. The immediate electron acceptor for the enzyme is believed to be ubiquinone. This is NADH-ubiquinone oxidoreductase chain 3 (nad3) from Dictyostelium discoideum (Social amoeba).